The following is a 392-amino-acid chain: Cell division protein FtsZ (392 aa).

GTP contacts are provided by residues G24 to N28, G111 to G113, E142, R145, and D189.

The protein belongs to the FtsZ family. In terms of assembly, homodimer. Polymerizes to form a dynamic ring structure in a strictly GTP-dependent manner. Interacts directly with several other division proteins.

It is found in the cytoplasm. Its function is as follows. Essential cell division protein that forms a contractile ring structure (Z ring) at the future cell division site. The regulation of the ring assembly controls the timing and the location of cell division. One of the functions of the FtsZ ring is to recruit other cell division proteins to the septum to produce a new cell wall between the dividing cells. Binds GTP and shows GTPase activity. The chain is Cell division protein FtsZ from Neisseria gonorrhoeae.